Reading from the N-terminus, the 130-residue chain is Nascent polypeptide-associated complex protein (130 aa).

One can recognise an NAC-A/B domain in the interval 8–75 (PKMMRQMQKM…AKNIKKDDIK (68 aa)).

This sequence belongs to the NAC-alpha family. As to quaternary structure, homodimer. Interacts with the ribosome. Binds ribosomal RNA.

Functionally, contacts the emerging nascent chain on the ribosome. The polypeptide is Nascent polypeptide-associated complex protein (Methanococcus aeolicus (strain ATCC BAA-1280 / DSM 17508 / OCM 812 / Nankai-3)).